The primary structure comprises 66 residues: Clarkitoxin-I-Mdum (66 aa).

Disulfide bonds link Cys-3–Cys-24, Cys-17–Cys-42, Cys-46–Cys-59, and Cys-60–Cys-65.

In terms of tissue distribution, expressed by the venom gland.

Its subcellular location is the secreted. Functionally, no toxicity is observed upon intravenous or intracerebroventricular injection into mice. Has no cytotoxic activity towards C2C12 cells at 100 ug/ml. This chain is Clarkitoxin-I-Mdum, found in Micrurus dumerilii (Coral snake).